A 154-amino-acid polypeptide reads, in one-letter code: Deoxyuridine 5'-triphosphate nucleotidohydrolase (154 aa).

Substrate contacts are provided by residues 68-70 (RSG), Asn-81, and 85-87 (TID).

It belongs to the dUTPase family. It depends on Mg(2+) as a cofactor.

It catalyses the reaction dUTP + H2O = dUMP + diphosphate + H(+). It participates in pyrimidine metabolism; dUMP biosynthesis; dUMP from dCTP (dUTP route): step 2/2. Functionally, this enzyme is involved in nucleotide metabolism: it produces dUMP, the immediate precursor of thymidine nucleotides and it decreases the intracellular concentration of dUTP so that uracil cannot be incorporated into DNA. This chain is Deoxyuridine 5'-triphosphate nucleotidohydrolase, found in Acidiphilium cryptum (strain JF-5).